We begin with the raw amino-acid sequence, 553 residues long: ATP synthase F(1) complex subunit alpha, mitochondrial (553 aa).

The N-terminal 43 residues, 1 to 43 (MLSVRVAAAVVRALPRRAGLVSRNALGSSFIAARNFHASNTHL), are a transit peptide targeting the mitochondrion. Phosphoserine is present on residues S53 and S65. Residue S76 is modified to Phosphoserine; alternate. A glycan (O-linked (GlcNAc) serine; alternate) is linked at S76. S106 carries the post-translational modification Phosphoserine. N6-acetyllysine is present on residues K123, K126, and K132. The residue at position 134 (T134) is a Phosphothreonine. K161 bears the N6-acetyllysine; alternate mark. K161 carries the N6-succinyllysine; alternate modification. S166 is subject to Phosphoserine. K167 is subject to N6-acetyllysine; alternate. K167 bears the N6-succinyllysine; alternate mark. S184 bears the Phosphoserine mark. An Omega-N-methylarginine modification is found at R204. ATP-binding residues include Q215, G217, K218, T219, and S220. Residue T219 coordinates Mg(2+). An N6-acetyllysine; alternate mark is found at K230 and K239. N6-succinyllysine; alternate is present on residues K230 and K239. Residue K240 is modified to N6-acetyllysine. An N6-acetyllysine; alternate mark is found at K261 and K305. N6-succinyllysine; alternate is present on residues K261 and K305. A Mg(2+)-binding site is contributed by D312. K427 bears the N6-acetyllysine; alternate mark. An N6-succinyllysine; alternate modification is found at K427. K434 is subject to N6-acetyllysine. The ATP site is built by Q473 and Q475. K498, K506, K531, and K539 each carry N6-acetyllysine; alternate. N6-succinyllysine; alternate is present on residues K498, K506, K531, and K539. Residue K541 is modified to N6-acetyllysine.

It belongs to the ATPase alpha/beta chains family. In terms of assembly, homotrimer. Component of the ATP synthase complex composed at least of ATP5F1A/subunit alpha, ATP5F1B/subunit beta, ATP5MC1/subunit c (homooctomer), MT-ATP6/subunit a, MT-ATP8/subunit 8, ATP5ME/subunit e, ATP5MF/subunit f, ATP5MG/subunit g, ATP5MK/subunit k, ATP5MJ/subunit j, ATP5F1C/subunit gamma, ATP5F1D/subunit delta, ATP5F1E/subunit epsilon, ATP5PF/subunit F6, ATP5PB/subunit b, ATP5PD/subunit d, ATP5PO/subunit OSCP. ATP synthase complex consists of a soluble F(1) head domain (subunits alpha(3) and beta(3)) - the catalytic core - and a membrane F(0) domain - the membrane proton channel (subunits c, a, 8, e, f, g, k and j). These two domains are linked by a central stalk (subunits gamma, delta, and epsilon) rotating inside the F1 region and a stationary peripheral stalk (subunits F6, b, d, and OSCP). Interacts with ATPAF2. Interacts with HRG; the interaction occurs on the surface of T-cells and alters the cell morphology when associated with concanavalin (in vitro). Interacts with PLG (angiostatin peptide); the interaction inhibits most of the angiogenic properties of angiostatin. Interacts with BLOC1S1. Interacts with BCL2L1 isoform BCL-X(L); the interaction mediates the association of BCL2L1 isoform BCL-X(L) with the mitochondrial membrane F(1)F(0) ATP synthase and enhances neurons metabolic efficiency. Interacts with CLN5 and PPT1. Interacts with S100A1; this interaction increases F1-ATPase activity. Interacts with ABCB7; this interaction allows the regulation of cellular iron homeostasis and cellular reactive oxygen species (ROS) levels in cardiomyocytes. In terms of processing, acetylated on lysine residues. BLOC1S1 is required for acetylation.

Its subcellular location is the mitochondrion inner membrane. The protein resides in the cell membrane. Its function is as follows. Subunit alpha, of the mitochondrial membrane ATP synthase complex (F(1)F(0) ATP synthase or Complex V) that produces ATP from ADP in the presence of a proton gradient across the membrane which is generated by electron transport complexes of the respiratory chain. ATP synthase complex consist of a soluble F(1) head domain - the catalytic core - and a membrane F(1) domain - the membrane proton channel. These two domains are linked by a central stalk rotating inside the F(1) region and a stationary peripheral stalk. During catalysis, ATP synthesis in the catalytic domain of F(1) is coupled via a rotary mechanism of the central stalk subunits to proton translocation. In vivo, can only synthesize ATP although its ATP hydrolase activity can be activated artificially in vitro. With the catalytic subunit beta (ATP5F1B), forms the catalytic core in the F(1) domain. Subunit alpha does not bear the catalytic high-affinity ATP-binding sites. In Pongo abelii (Sumatran orangutan), this protein is ATP synthase F(1) complex subunit alpha, mitochondrial.